The sequence spans 505 residues: ATP synthase subunit alpha (505 aa).

Residue 170 to 177 (GDRQTGKT) participates in ATP binding.

It belongs to the ATPase alpha/beta chains family. F-type ATPases have 2 components, CF(1) - the catalytic core - and CF(0) - the membrane proton channel. CF(1) has five subunits: alpha(3), beta(3), gamma(1), delta(1), epsilon(1). CF(0) has four main subunits: a(1), b(1), b'(1) and c(9-12).

Its subcellular location is the cellular thylakoid membrane. It catalyses the reaction ATP + H2O + 4 H(+)(in) = ADP + phosphate + 5 H(+)(out). Functionally, produces ATP from ADP in the presence of a proton gradient across the membrane. The alpha chain is a regulatory subunit. The chain is ATP synthase subunit alpha from Prochlorococcus marinus (strain MIT 9515).